We begin with the raw amino-acid sequence, 290 residues long: Homeobox protein EMX1 (290 aa).

The homeobox DNA-binding region spans 192–251 (PKRIRTAFSPSQLLRLERAFEKNHYVVGAERKQLAGSLSLSETQVKVWFQNRRTKYKRQK). The disordered stretch occupies residues 249-290 (RQKLEEEGPESEQKKKGSHHINRWRIATKQANGEDIDVTSND). The span at 250–263 (QKLEEEGPESEQKK) shows a compositional bias: basic and acidic residues.

The protein belongs to the EMX homeobox family. As to quaternary structure, interacts with WRD11 (via the N-terminal and the central portion of the protein); the interaction associates EMX1 with GLI3. In terms of tissue distribution, cerebral cortex.

It localises to the nucleus. The protein localises to the cytoplasm. Functionally, transcription factor, which in cooperation with EMX2, acts to generate the boundary between the roof and archipallium in the developing brain. May function in combinations with OTX1/2 to specify cell fates in the developing central nervous system. The protein is Homeobox protein EMX1 of Homo sapiens (Human).